The chain runs to 435 residues: Glutamate-1-semialdehyde 2,1-aminomutase (435 aa).

The residue at position 266 (Lys266) is an N6-(pyridoxal phosphate)lysine.

Belongs to the class-III pyridoxal-phosphate-dependent aminotransferase family. HemL subfamily. In terms of assembly, homodimer. Pyridoxal 5'-phosphate serves as cofactor.

Its subcellular location is the cytoplasm. It carries out the reaction (S)-4-amino-5-oxopentanoate = 5-aminolevulinate. The protein operates within porphyrin-containing compound metabolism; protoporphyrin-IX biosynthesis; 5-aminolevulinate from L-glutamyl-tRNA(Glu): step 2/2. In Helicobacter hepaticus (strain ATCC 51449 / 3B1), this protein is Glutamate-1-semialdehyde 2,1-aminomutase.